Reading from the N-terminus, the 559-residue chain is 2,3-bisphosphoglycerate-independent phosphoglycerate mutase (559 aa).

Residues Asp-28 and Ser-81 each coordinate Mn(2+). Ser-81 acts as the Phosphoserine intermediate in catalysis. Substrate is bound by residues His-140, Arg-170–Asp-171, Arg-206, Arg-213, Arg-286–Arg-289, and Lys-361. Positions 430, 434, 471, 472, and 501 each coordinate Mn(2+).

It belongs to the BPG-independent phosphoglycerate mutase family. As to quaternary structure, monomer. Mn(2+) is required as a cofactor.

It is found in the cytoplasm. It carries out the reaction (2R)-2-phosphoglycerate = (2R)-3-phosphoglycerate. It participates in carbohydrate degradation; glycolysis; pyruvate from D-glyceraldehyde 3-phosphate: step 3/5. Functionally, catalyzes the interconversion of 2-phosphoglycerate and 3-phosphoglycerate. This Mesembryanthemum crystallinum (Common ice plant) protein is 2,3-bisphosphoglycerate-independent phosphoglycerate mutase (PGM1).